Consider the following 144-residue polypeptide: Peptide methionine sulfoxide reductase MsrB (144 aa).

The MsrB domain maps to 5–128; the sequence is QEELRQRIGH…NSAALDFIPY (124 aa). Cys-117 serves as the catalytic Nucleophile.

It belongs to the MsrB Met sulfoxide reductase family.

It carries out the reaction L-methionyl-[protein] + [thioredoxin]-disulfide + H2O = L-methionyl-(R)-S-oxide-[protein] + [thioredoxin]-dithiol. This is Peptide methionine sulfoxide reductase MsrB from Streptococcus agalactiae serotype Ia (strain ATCC 27591 / A909 / CDC SS700).